The following is a 168-amino-acid chain: Protein SprT (168 aa).

Residues 20 to 166 enclose the SprT-like domain; it reads EKLQQANKYL…RHCQAILQLI (147 aa). His78 provides a ligand contact to Zn(2+). Residue Glu79 is part of the active site. A Zn(2+)-binding site is contributed by His82.

The protein belongs to the SprT family. Requires Zn(2+) as cofactor.

Its subcellular location is the cytoplasm. In Proteus mirabilis (strain HI4320), this protein is Protein SprT.